A 433-amino-acid chain; its full sequence is Serine/threonine-protein kinase DCLK1 (433 aa).

The disordered stretch occupies residues 1–74 (MLELIEVNGT…GEEESDEGFQ (74 aa)). 10 positions are modified to phosphoserine: S23, S25, S27, S30, S40, S45, S46, S48, S57, and S69. A compositionally biased stretch (low complexity) spans 40–57 (SQHGGSSTSLSSTKVCSS). A compositionally biased stretch (acidic residues) spans 59-71 (DENDGPGEEESDE). A Protein kinase domain is found at 83 to 340 (YKVGRTIGDG…AVQVLEHPWV (258 aa)). ATP-binding positions include 89–97 (IGDGNFAVV) and K112. Catalysis depends on D204, which acts as the Proton acceptor. Y213 bears the Phosphotyrosine mark. Over residues 388 to 400 (QVFRRRRNQDVRG) the composition is skewed to basic and acidic residues. A disordered region spans residues 388–433 (QVFRRRRNQDVRGRYKAQPAPPELNSESEDYSPSSSETVRSPNSPF). A phosphoserine mark is found at S419, S428, and S431.

It belongs to the protein kinase superfamily. CAMK Ser/Thr protein kinase family. CaMK subfamily.

It catalyses the reaction L-seryl-[protein] + ATP = O-phospho-L-seryl-[protein] + ADP + H(+). It carries out the reaction L-threonyl-[protein] + ATP = O-phospho-L-threonyl-[protein] + ADP + H(+). Functionally, probable kinase that may be involved in a calcium-signaling pathway controlling neuronal migration in the developing brain. May also participate in functions of the mature nervous system. The chain is Serine/threonine-protein kinase DCLK1 (Dclk1) from Rattus norvegicus (Rat).